The following is a 249-amino-acid chain: Cytoplasmic envelopment protein 1 (249 aa).

It belongs to the herpesviridae cytoplasmic envelopment protein 1 family.

It is found in the virion. The protein localises to the virion tegument. The protein resides in the host cytoplasm. Its subcellular location is the host Golgi apparatus. Plays a critical role in cytoplasmic virus egress. Participates in the final step of tegumentation and envelope acquisition within the host cytoplasm. This Human herpesvirus 6A (strain Uganda-1102) (HHV-6 variant A) protein is Cytoplasmic envelopment protein 1 (U75).